We begin with the raw amino-acid sequence, 408 residues long: LIN1-like protein (408 aa).

The disordered stretch occupies residues 1-161 (MKRTLRNPGN…SVPSSPKRMS (161 aa)). Residues 41 to 52 (YYESESEEDEDQ) are compositionally biased toward acidic residues. 3 stretches are compositionally biased toward basic and acidic residues: residues 53-62 (ILNKEKKEGQ), 73-109 (DEKR…KEVL), and 119-129 (NGKYSKLRYED). The region spanning 344-402 (SSQYNFKWEFDDKTYGPYTASQIQAWSNEGYFTDAKHAAFIQLANMDEWMYPNNICFCD) is the GYF domain.

The protein belongs to the LIN1 family.

The chain is LIN1-like protein from Schizosaccharomyces pombe (strain 972 / ATCC 24843) (Fission yeast).